The chain runs to 517 residues: MQLNPAEISELIKSRIEGLAGSSDIRNEGTVVSVTDGIVRVHGLSDVMQGEMLEFPAGKDGQPSFGLALNLERDSVGAVILGEYEHISEGDTVKCTGRILEVPVGPELIGRVVNALGQPIDGKGPINAKMTDVIEKVAPGVIARQSVDQPLQTGIKSIDSMVPVGRGQRELIIGDRQTGKTAVAIDAIINQKGQGVTCIYVAIGQKASSIKNVVRALEQAGAMEYTIVVAATASESAAMQYVSAYSGCTMGEYFRDRGEDALIVYDDLSKQAVAYRQVSLLLRRPPGREAFPGDVFYLHSRLLERAARVNADYVEAFTKGEVKGKTGSLTALPIIETQAGDVSAFVPTNVISITDGQIFLETSLFNAGIRPAINAGISVSRVGGAAQTKLVKGQSGGIRTDLAQYRELAAFAQFASDLDEATRKQLDRGARVTELLKQAQYSPLSTALMGASLFAVNKGYMDDIQVKQVLAFESGLHQFLKTSHGALIDKLNASKAMDKDSEAELNAAIAAFKKSFA.

174–181 (GDRQTGKT) is a binding site for ATP.

This sequence belongs to the ATPase alpha/beta chains family. As to quaternary structure, F-type ATPases have 2 components, CF(1) - the catalytic core - and CF(0) - the membrane proton channel. CF(1) has five subunits: alpha(3), beta(3), gamma(1), delta(1), epsilon(1). CF(0) has three main subunits: a(1), b(2) and c(9-12). The alpha and beta chains form an alternating ring which encloses part of the gamma chain. CF(1) is attached to CF(0) by a central stalk formed by the gamma and epsilon chains, while a peripheral stalk is formed by the delta and b chains.

The protein resides in the cell inner membrane. It carries out the reaction ATP + H2O + 4 H(+)(in) = ADP + phosphate + 5 H(+)(out). In terms of biological role, produces ATP from ADP in the presence of a proton gradient across the membrane. The alpha chain is a regulatory subunit. The chain is ATP synthase subunit alpha from Delftia acidovorans (strain DSM 14801 / SPH-1).